Here is a 198-residue protein sequence, read N- to C-terminus: Carnitine operon protein CaiE (198 aa).

Residues 179 to 198 (VEENRPRLKGTTDVKPKSAQ) are disordered. Residues 180-198 (EENRPRLKGTTDVKPKSAQ) are compositionally biased toward basic and acidic residues.

This sequence belongs to the transferase hexapeptide repeat family.

The protein operates within amine and polyamine metabolism; carnitine metabolism. Overproduction of CaiE stimulates the activity of CaiB and CaiD. The protein is Carnitine operon protein CaiE of Salmonella agona (strain SL483).